The sequence spans 268 residues: Putative esterase/lipase 1 (268 aa).

Residue His-27 is part of the active site. Ser-94 acts as the Charge relay system in catalysis.

Belongs to the lipase/esterase LIP3/BchO family.

The sequence is that of Putative esterase/lipase 1 from Mycoplasma genitalium (strain ATCC 33530 / DSM 19775 / NCTC 10195 / G37) (Mycoplasmoides genitalium).